Here is a 292-residue protein sequence, read N- to C-terminus: MEITASLVKELRERTGAGMMECKKALVENAGDIDAAAEWLRKSGLAKADKKADRVAAEGRIATAQAGGKAVLVEVNSETDFVAKDENFLAFTEVVANAALNSDAADAEALKSVKLDSGETIEERRAAVIAKVGENLQVRRLVRIDSANNVAAYVHGGRIGVLVELKGGDIELARGIAMHIAAMNPPHVKASDVPAEFVAKEKEIELAKMSEKDKAKPAEILEKIISGKISKIVNEVTLYGQPYVLNTDQTVEQAVKAAGAEVIGFQRLAVGEGIEKVVEDYAAEVMKQAGLA.

Positions 79–82 (TDFV) are involved in Mg(2+) ion dislocation from EF-Tu.

It belongs to the EF-Ts family.

Its subcellular location is the cytoplasm. In terms of biological role, associates with the EF-Tu.GDP complex and induces the exchange of GDP to GTP. It remains bound to the aminoacyl-tRNA.EF-Tu.GTP complex up to the GTP hydrolysis stage on the ribosome. In Xanthomonas axonopodis pv. citri (strain 306), this protein is Elongation factor Ts.